A 291-amino-acid polypeptide reads, in one-letter code: Probable 2-(5''-triphosphoribosyl)-3'-dephosphocoenzyme-A synthase (291 aa).

The protein belongs to the CitG/MdcB family.

It catalyses the reaction 3'-dephospho-CoA + ATP = 2'-(5''-triphospho-alpha-D-ribosyl)-3'-dephospho-CoA + adenine. Its function is as follows. Involved in the formation of 2-(5''-phosphoribosyl)-3'-dephosphocoenzyme-A, the prosthetic group of the acyl-carrier protein of the malonate decarboxylase. This Pseudomonas savastanoi pv. phaseolicola (strain 1448A / Race 6) (Pseudomonas syringae pv. phaseolicola (strain 1448A / Race 6)) protein is Probable 2-(5''-triphosphoribosyl)-3'-dephosphocoenzyme-A synthase.